The chain runs to 330 residues: Phenylalanine--tRNA ligase alpha subunit (330 aa).

Glu246 serves as a coordination point for Mg(2+).

Belongs to the class-II aminoacyl-tRNA synthetase family. Phe-tRNA synthetase alpha subunit type 1 subfamily. Tetramer of two alpha and two beta subunits. The cofactor is Mg(2+).

It localises to the cytoplasm. It catalyses the reaction tRNA(Phe) + L-phenylalanine + ATP = L-phenylalanyl-tRNA(Phe) + AMP + diphosphate + H(+). This chain is Phenylalanine--tRNA ligase alpha subunit, found in Sulfurovum sp. (strain NBC37-1).